We begin with the raw amino-acid sequence, 204 residues long: Intraflagellar transport protein 27 (204 aa).

Residues 23 to 30 (GEATVGKS), 75 to 79 (DTAGS), and 136 to 139 (NKTD) contribute to the GTP site.

The protein belongs to the small GTPase superfamily. Rab family. Component of the IFT complex B, the core composed of IFT25, IFT27, IFT46, IFT52, IFT74, IFT81 and IFT88 as well as associated subunits IFT20, IFT57, IFT80 and IFT172. Interacts with IFT25; the interaction is direct.

It is found in the cell projection. The protein localises to the cilium. It localises to the flagellum. Its subcellular location is the cytoplasm. The protein resides in the cytoskeleton. It is found in the flagellum basal body. Functionally, small GTPase-like component of the intraflagellar transport (IFT) complex B. Forms a subcomplex within the IFT complex B with IFT25. Has very low GTPase activity either because it lacks the conserved catalytic Gln in position 79 or because it requires some GTPase-activating protein (GAP) for GTP turnover. This is Intraflagellar transport protein 27 (IFT27) from Chlamydomonas reinhardtii (Chlamydomonas smithii).